Consider the following 479-residue polypeptide: Isoprimeverose transporter (479 aa).

11 helical membrane passes run 54–74, 102–122, 131–151, 174–194, 205–225, 253–273, 289–309, 321–341, 348–368, 397–417, and 431–451; these read MFFY…LFLV, PYWL…FTVP, VWAY…NIPI, FMGT…VAYF, WFMV…IVFA, WPWV…QTRS, LASF…ITPW, LMGM…SKAL, VGTI…AVML, FGMG…GYVA, and MNYV…LLFY.

It belongs to the sodium:galactoside symporter (TC 2.A.2) family.

It is found in the cell membrane. Functionally, involved in the metabolism of isoprimeverose. Transports isoprimeverose into the cell. Transport is driven by the proton motive force generated by malolactic fermentation. Cannot transport D-xylose. This is Isoprimeverose transporter from Lactiplantibacillus pentosus (Lactobacillus pentosus).